A 317-amino-acid chain; its full sequence is 2,3-dihydroxyphenylpropionate/2,3-dihydroxicinnamic acid 1,2-dioxygenase (317 aa).

Catalysis depends on His115, which acts as the Proton donor. His179 (proton acceptor) is an active-site residue.

Belongs to the LigB/MhpB extradiol dioxygenase family. In terms of assembly, homotetramer. Fe(2+) is required as a cofactor.

It catalyses the reaction 3-(2,3-dihydroxyphenyl)propanoate + O2 = (2Z,4E)-2-hydroxy-6-oxonona-2,4-dienedioate + H(+). The enzyme catalyses (2E)-3-(2,3-dihydroxyphenyl)prop-2-enoate + O2 = (2Z,4E,7E)-2-hydroxy-6-oxonona-2,4,7-trienedioate + H(+). It participates in aromatic compound metabolism; 3-phenylpropanoate degradation. In terms of biological role, catalyzes the non-heme iron(II)-dependent oxidative cleavage of 2,3-dihydroxyphenylpropionic acid and 2,3-dihydroxicinnamic acid into 2-hydroxy-6-ketononadienedioate and 2-hydroxy-6-ketononatrienedioate, respectively. This is 2,3-dihydroxyphenylpropionate/2,3-dihydroxicinnamic acid 1,2-dioxygenase from Paraburkholderia phymatum (strain DSM 17167 / CIP 108236 / LMG 21445 / STM815) (Burkholderia phymatum).